Consider the following 366-residue polypeptide: MSSNFLNPVTTQTWANGRHLVRCVKVIQETWDVRTFCFMADQPILFFFKPGQFVTLELEIDGEPVMRSYTISSSPSVPYSFSITIKRVPGGRVSNWLHDNLKEGQELPVHGPVGLFNAIDFPADKVLFLSGGVGITPVMSMARWFFDTNANVDMVFVHSARSPKDIIYHRELEHMASRIDNFSLHIICERHGLGEAWAGYRGYLNLRMLELIAPDFLEREIFCCGPTPYMSAVKHLLQGHGYDMSRYHEEAFGPTPPEVRADVRELAAEAAEAPEVPVADQHQVEFTATGKSIRVSPGETVHAAAAKLGLHIPKACGMGICGTCKVMKTAGEVEMEHNGGITDEDVAEGYILSCCSVPKGDVVIDY.

Residues N16–I119 enclose the FAD-binding FR-type domain. The 2Fe-2S ferredoxin-type domain occupies H282 to Y366. Residues C316, C321, C324, and C354 each contribute to the [2Fe-2S] cluster site.

In the N-terminal section; belongs to the FAD-binding oxidoreductase type 6 family. As to quaternary structure, the system is composed of an oxygenase subunit (GbcA) and a reductase subunit (GbcB). It depends on FAD as a cofactor. [2Fe-2S] cluster is required as a cofactor.

It carries out the reaction glycine betaine + NADH + O2 + H(+) = N,N-dimethylglycine + formaldehyde + NAD(+) + H2O. In terms of biological role, involved in degradation of glycine betaine. Part of a Rieske-type oxygenase system that catalyzes the conversion of glycine betaine (GB) to dimethylglycine (DMG). This subunit is the ferredoxin reductase component of the system. Required for growth on choline and GB, but not for growth on DMG. The polypeptide is Glycine betaine monooxygenase reductase subunit (Pseudomonas aeruginosa (strain ATCC 15692 / DSM 22644 / CIP 104116 / JCM 14847 / LMG 12228 / 1C / PRS 101 / PAO1)).